Consider the following 294-residue polypeptide: Oligopeptide transport system permease protein OppC (294 aa).

The next 6 helical transmembrane spans lie at 27-47 (MIST…SMFL), 94-114 (IAFA…VITG), 127-147 (FTDF…VTII), 151-171 (NSWS…TRLI), 202-224 (IWPN…NIGL), and 260-280 (WTWV…IFIG). The ABC transmembrane type-1 domain occupies 88–280 (ARNSFNIAFA…IVVLAIIFIG (193 aa)).

The protein belongs to the binding-protein-dependent transport system permease family. OppBC subfamily. In terms of assembly, the complex is composed of two ATP-binding proteins (OppD and OppF), two transmembrane proteins (OppB and OppC) and a solute-binding protein (OppA).

Its subcellular location is the cell membrane. Functionally, part of the ABC transporter complex OppABCDF involved in the uptake of oligopeptides. Probably responsible for the translocation of the substrate across the membrane. Essential for uptake of peptides larger than three amino acids and for growth in milk. This is Oligopeptide transport system permease protein OppC (oppC) from Lactococcus lactis subsp. lactis (strain IL1403) (Streptococcus lactis).